The sequence spans 476 residues: Protein transport protein Sec61 subunit alpha (476 aa).

Residues 2-33 (GIKFLEVIKPFCAVLPEIQKPERKIQFREKVL) lie on the Cytoplasmic side of the membrane. A helical transmembrane segment spans residues 34–53 (WTAITLFIFLVCCQIPLFGI). Residues 54 to 76 (MSSDSADPFYWMRVILASNRGTL) are Lumenal-facing. The chain crosses the membrane as a helical span at residues 77 to 96 (MELGISPIVTSGLIMQLLAG). Topologically, residues 97–117 (AKIIEVGDTPKDRALFNGAQK) are cytoplasmic. A helical transmembrane segment spans residues 118–138 (LFGMIITIGQAIVYVMTGMYG). At 139–144 (DPSEMG) the chain is on the lumenal side. The chain crosses the membrane as a helical span at residues 145-165 (AGICLLIIIQLFVAGLIVLLL). Residues 166–172 (DELLQKG) are Cytoplasmic-facing. The helical transmembrane segment at 173–193 (YGLGSGISLFIATNICETIVW) threads the bilayer. The Lumenal segment spans residues 194–240 (KAFSPTTVNTGRGTEFEGAIIALFHLLATRTDKVRALREAFYRQNLP). A helical membrane pass occupies residues 241–261 (NILNLIATVFVFAVVIYFQGF). Over 262 to 288 (RVDLPIKSARYRGQYNTYPIKLFYTSN) the chain is Cytoplasmic. Residues 289–309 (IPIILQSALVSNLYVISQMLS) form a helical membrane-spanning segment. Topologically, residues 310 to 354 (TRFSGNFLVNLLGTWSDATSGGPARAYPVAGLCYYLSPPESFGSV) are lumenal. A helical transmembrane segment spans residues 355 to 375 (LDDPVHAAIYIVFMLGSCAFF). At 376–420 (SKTWIEVSGSSAKDVAKQLKEQQMVMRGHRETSMVHELNRYIPTA) the chain is on the cytoplasmic side. The chain crosses the membrane as a helical span at residues 421–441 (AAFGGLCIGGLSVMADFLGAI). At 442–445 (GSGT) the chain is on the lumenal side. A helical transmembrane segment spans residues 446-462 (GILLAVTIIYQYFEIFV). The Cytoplasmic segment spans residues 463 to 476 (KEQSEMGSMGALLF).

Belongs to the SecY/SEC61-alpha family. In terms of assembly, the SEC61 channel-forming translocon complex consists of channel-forming core components SEC61A1, SEC61B and SEC61G and different auxiliary components such as SEC62 and SEC63. The SEC61 channel associates with the multi-pass translocon (MPT) complex.

The protein resides in the endoplasmic reticulum membrane. Its function is as follows. Component of SEC61 channel-forming translocon complex that mediates transport of signal peptide-containing precursor polypeptides across the endoplasmic reticulum (ER). Forms a ribosome receptor and a gated pore in the ER membrane, both functions required for cotranslational translocation of nascent polypeptides. May cooperate with auxiliary protein SEC62, SEC63 and HSPA5/BiP to enable post-translational transport of small presecretory proteins. The SEC61 channel is also involved in ER membrane insertion of transmembrane proteins: it mediates membrane insertion of the first few transmembrane segments of proteins, while insertion of subsequent transmembrane regions of multi-pass membrane proteins is mediated by the multi-pass translocon (MPT) complex. The chain is Protein transport protein Sec61 subunit alpha (sec61a) from Dissostichus mawsoni (Antarctic cod).